The sequence spans 142 residues: Large ribosomal subunit protein uL16 (142 aa).

This sequence belongs to the universal ribosomal protein uL16 family. Part of the 50S ribosomal subunit.

In terms of biological role, binds 23S rRNA and is also seen to make contacts with the A and possibly P site tRNAs. This Thermotoga neapolitana (strain ATCC 49049 / DSM 4359 / NBRC 107923 / NS-E) protein is Large ribosomal subunit protein uL16.